The primary structure comprises 1074 residues: Isoleucine--tRNA ligase (1074 aa).

The 'HIGH' region signature appears at 50–60 (PYTSGAAHMGT). The short motif at 605 to 609 (GMSKS) is the 'KMSKS' region element. K608 contributes to the ATP binding site.

Belongs to the class-I aminoacyl-tRNA synthetase family. IleS type 2 subfamily. In terms of assembly, monomer. Zn(2+) serves as cofactor.

It is found in the cytoplasm. The enzyme catalyses tRNA(Ile) + L-isoleucine + ATP = L-isoleucyl-tRNA(Ile) + AMP + diphosphate. In terms of biological role, catalyzes the attachment of isoleucine to tRNA(Ile). As IleRS can inadvertently accommodate and process structurally similar amino acids such as valine, to avoid such errors it has two additional distinct tRNA(Ile)-dependent editing activities. One activity is designated as 'pretransfer' editing and involves the hydrolysis of activated Val-AMP. The other activity is designated 'posttransfer' editing and involves deacylation of mischarged Val-tRNA(Ile). The sequence is that of Isoleucine--tRNA ligase from Haloarcula marismortui (strain ATCC 43049 / DSM 3752 / JCM 8966 / VKM B-1809) (Halobacterium marismortui).